The chain runs to 177 residues: Large ribosomal subunit protein uL10 (177 aa).

Belongs to the universal ribosomal protein uL10 family. As to quaternary structure, part of the ribosomal stalk of the 50S ribosomal subunit. The N-terminus interacts with L11 and the large rRNA to form the base of the stalk. The C-terminus forms an elongated spine to which L12 dimers bind in a sequential fashion forming a multimeric L10(L12)X complex.

Functionally, forms part of the ribosomal stalk, playing a central role in the interaction of the ribosome with GTP-bound translation factors. The polypeptide is Large ribosomal subunit protein uL10 (Leptospira biflexa serovar Patoc (strain Patoc 1 / Ames)).